The chain runs to 1597 residues: Mitogen-activated protein kinase kinase kinase 4 (1597 aa).

2 disordered regions span residues 1 to 128 (MRDA…VETV) and 424 to 465 (SPRP…PRVP). The segment covering 59 to 69 (SDPEDFSDETN) has biased composition (acidic residues). Residue S77 is modified to Phosphoserine. Positions 84–94 (QMKRLSAKHQR) are enriched in basic residues. S424 carries the post-translational modification Phosphoserine. T440 is subject to Phosphothreonine. Phosphoserine is present on S449. A compositionally biased stretch (acidic residues) spans 449-458 (SGTEESDEEP). T451 carries the post-translational modification Phosphothreonine. Phosphoserine occurs at positions 454 and 492. Disordered stretches follow at residues 1137 to 1157 (RPVK…IIPT), 1190 to 1220 (AAGR…SVPE), and 1233 to 1263 (FRSL…TRRS). The segment covering 1210–1219 (APDTRGSSVP) has biased composition (polar residues). 2 positions are modified to phosphoserine: S1241 and S1263. Residues 1241-1250 (SPTEERDEPA) show a composition bias toward basic and acidic residues. The Protein kinase domain occupies 1332-1590 (WQRGNKIGEG…ASQLLDHAFV (259 aa)). ATP contacts are provided by residues 1338 to 1346 (IGEGQYGKV) and K1361. D1452 functions as the Proton acceptor in the catalytic mechanism.

It belongs to the protein kinase superfamily. STE Ser/Thr protein kinase family. MAP kinase kinase kinase subfamily. In terms of assembly, monomer and homodimer. Homodimerization enhances kinase activity. Interacts with CDC42. Interacts with TRAF4; this promotes homodimerization. Binds both upstream activators and downstream substrates in multimolecular complexes. Interacts with AXIN1 and DIXDC1; interaction with DIXDC1 prevents interaction with AXIN1. Interacts with GADD45 and MAP2K6. Interacts with ZFP36; this interaction enhances the association with SH3KBP1/CIN85. Interacts with SH3KBP1; this interaction enhances the association with ZFP36. Mg(2+) serves as cofactor. As to expression, widely expressed. High expression was found in skeletal muscle, kidney, testis followed by heart brain and lung. Low expression was found in spleen.

It is found in the cytoplasm. Its subcellular location is the perinuclear region. It carries out the reaction L-seryl-[protein] + ATP = O-phospho-L-seryl-[protein] + ADP + H(+). The enzyme catalyses L-threonyl-[protein] + ATP = O-phospho-L-threonyl-[protein] + ADP + H(+). N-terminal autoinhibitory domain interacts with the C-terminal kinase domain, inhibiting kinase activity, and preventing interaction with its substrate, MAP2K6. The GADD45 proteins activate the kinase by binding to the N-terminal domain. Activated by phosphorylation on Thr-1494. In terms of biological role, component of a protein kinase signal transduction cascade. Activates the CSBP2, P38 and JNK MAPK pathways, but not the ERK pathway. Specifically phosphorylates and activates MAP2K4 and MAP2K6. This chain is Mitogen-activated protein kinase kinase kinase 4 (Map3k4), found in Mus musculus (Mouse).